The sequence spans 144 residues: Large ribosomal subunit protein uL15 (144 aa).

The tract at residues 1 to 25 (MFLNTIGARDGSRPEKKRVGRGIGS) is disordered.

It belongs to the universal ribosomal protein uL15 family. As to quaternary structure, part of the 50S ribosomal subunit.

Its function is as follows. Binds to the 23S rRNA. This Methylococcus capsulatus (strain ATCC 33009 / NCIMB 11132 / Bath) protein is Large ribosomal subunit protein uL15.